The sequence spans 190 residues: Shikimate kinase (190 aa).

ATP is bound at residue 14–19; it reads GAGKST. Serine 18 serves as a coordination point for Mg(2+). Positions 36, 60, and 82 each coordinate substrate. Arginine 120 contacts ATP. Residue arginine 139 coordinates substrate.

The protein belongs to the shikimate kinase family. In terms of assembly, monomer. Mg(2+) serves as cofactor.

The protein localises to the cytoplasm. It catalyses the reaction shikimate + ATP = 3-phosphoshikimate + ADP + H(+). The protein operates within metabolic intermediate biosynthesis; chorismate biosynthesis; chorismate from D-erythrose 4-phosphate and phosphoenolpyruvate: step 5/7. Catalyzes the specific phosphorylation of the 3-hydroxyl group of shikimic acid using ATP as a cosubstrate. In Thioalkalivibrio sulfidiphilus (strain HL-EbGR7), this protein is Shikimate kinase.